Reading from the N-terminus, the 331-residue chain is Pantothenate kinase (331 aa).

109–116 (GSVAVGKS) lines the ATP pocket.

The protein belongs to the prokaryotic pantothenate kinase family.

The protein resides in the cytoplasm. The enzyme catalyses (R)-pantothenate + ATP = (R)-4'-phosphopantothenate + ADP + H(+). The protein operates within cofactor biosynthesis; coenzyme A biosynthesis; CoA from (R)-pantothenate: step 1/5. The sequence is that of Pantothenate kinase from Rhizobium meliloti (strain 1021) (Ensifer meliloti).